Here is a 138-residue protein sequence, read N- to C-terminus: Biopolymer transport protein exbD1 (138 aa).

Residues 1 to 16 (MIKSSAKHNDFGLTPD) lie on the Cytoplasmic side of the membrane. A helical membrane pass occupies residues 17–37 (LTPLLDIIFIVMVFLLLTASV). The Periplasmic portion of the chain corresponds to 38 to 138 (RLESLEVALP…TQLLTEPSHS (101 aa)).

Belongs to the ExbD/TolR family. As to quaternary structure, the accessory proteins ExbB and ExbD seem to form a complex with TonB.

It localises to the cell inner membrane. In terms of biological role, involved in the TonB-dependent energy-dependent transport of various receptor-bound substrates. The sequence is that of Biopolymer transport protein exbD1 (exbD1) from Vibrio cholerae serotype O1 (strain ATCC 39315 / El Tor Inaba N16961).